Consider the following 249-residue polypeptide: Exosome complex component Rrp4 (249 aa).

The region spanning 73-144 (NDIVIGLVED…RSIDPVLSVK (72 aa)) is the S1 motif domain. The KH domain maps to 154–211 (GIVIDIMPVKVPRVIGKNKSMYETLTSKSGCSIFVANNGRIWATCPSRFSEEILIEAI).

This sequence belongs to the RRP4 family. Component of the archaeal exosome complex. Forms a trimer of Rrp4 and/or Csl4 subunits. The trimer associates with a hexameric ring-like arrangement composed of 3 Rrp41-Rrp42 heterodimers.

The protein localises to the cytoplasm. Its function is as follows. Non-catalytic component of the exosome, which is a complex involved in RNA degradation. Increases the RNA binding and the efficiency of RNA degradation. Confers strong poly(A) specificity to the exosome. This Saccharolobus solfataricus (strain ATCC 35092 / DSM 1617 / JCM 11322 / P2) (Sulfolobus solfataricus) protein is Exosome complex component Rrp4.